Reading from the N-terminus, the 552-residue chain is Transcription factor lcsF (552 aa).

Disordered stretches follow at residues 1–132 (MAPA…DLDP), 169–209 (TSSY…ASLS), 232–258 (EATS…HWSS), and 297–349 (ELTS…QHGA). The basic motif stretch occupies residues 31-55 (KDRKEKKRIQNRVAQRSYRSRMKAR). Residues 31 to 76 (KDRKEKKRIQNRVAQRSYRSRMKARLGELQSRLQAHEEQKAKEEAE) form the bZIP domain. The interval 56–63 (LGELQSRL) is leucine-zipper. The span at 64 to 79 (QAHEEQKAKEEAERCD) shows a compositional bias: basic and acidic residues. Composition is skewed to polar residues over residues 98 to 119 (TPPS…NSAS) and 169 to 186 (TSSY…SLSQ). Positions 298-347 (LTSTGDLPNATWRPSQQFSGPETTPRSHNAENPTQQQSPINDDTPSTTQH) are enriched in polar residues.

Belongs to the bZIP family.

The protein localises to the nucleus. Transcription factor that regulates the expression of the gene cluster that mediates the biosynthesis of the lipopeptide antibiotics leucinostatins that show extensive biological activities, including antimalarial, antiviral, antibacterial, antifungal, and antitumor activities, as well as phytotoxic. All 20 genes in the cluster are up-regulated to some extent by lcsF, with the exception of lcsL and lcsP, which are down-regulated. This Purpureocillium lilacinum (Paecilomyces lilacinus) protein is Transcription factor lcsF.